The primary structure comprises 61 residues: Adipokinetic prohormone type 2 (61 aa).

The N-terminal stretch at 1-22 (MRQGCALTLMLLVVVCAALSAA) is a signal peptide. Residue Gln23 is modified to Pyrrolidone carboxylic acid. Residue Trp30 is modified to Tryptophan amide.

This sequence belongs to the AKH/HRTH/RPCH family. In terms of assembly, adipokinetic hormone precursor-related peptide (APRP) can form three type of disulfide-bond dimers: p1 (alpha-alpha), p2 (alpha-beta), and p3 (beta-beta).

It is found in the secreted. Its function is as follows. This hormone, released from cells in the corpora cardiaca, causes release of diglycerides from the fat body and stimulation of muscles to use these diglycerides as an energy source during energy-demanding processes. This Schistocerca nitens (Vagrant locust) protein is Adipokinetic prohormone type 2.